The sequence spans 370 residues: Protein rough sheath 2 (370 aa).

HTH myb-type domains are found at residues 1–53 and 54–108; these read MKER…KNYL and RPGI…EKQQ. 2 DNA-binding regions (H-T-H motif) span residues 27 to 53 and 81 to 104; these read WHLV…KNYL and WKKI…EVFK. The tract at residues 107–129 is disordered; sequence QQRELRDSRRPPPEPSPDERGRY. Residues 276 to 340 are a coiled coil; that stretch reads KRVEQQLEME…QVKEEKMAEQ (65 aa).

In terms of assembly, homodimer. Interacts with AS2, WRKY1, HIRA, a probable histone chaperone, and RIK, a predicted RNA binding protein. In terms of tissue distribution, expressed in lateral organ promordia.

The protein localises to the nucleus. Its function is as follows. Transcription factor required for normal cell differentiation. Interacts directly with asymmetric leaves 2 (AS2) to repress the knox homeobox genes. This chain is Protein rough sheath 2 (RS2), found in Zea mays (Maize).